We begin with the raw amino-acid sequence, 359 residues long: uncharacterized protein (359 aa).

The N-terminal stretch at 1 to 15 (MSIVLAIDTATAAVT) is a signal peptide. The N-acetyltransferase domain occupies 212-359 (IVIGTLTPAD…DAYLMRREAQ (148 aa)).

This is an uncharacterized protein from Mycobacterium leprae (strain TN).